A 332-amino-acid chain; its full sequence is Biotin synthase (332 aa).

Positions 53-283 (WGKGGIHACS…VHPHSIIKFA (231 aa)) constitute a Radical SAM core domain. The [4Fe-4S] cluster site is built by Cys71, Cys75, and Cys78. The [2Fe-2S] cluster site is built by Cys150, Cys211, and Lys281.

This sequence belongs to the radical SAM superfamily. Biotin synthase family. Homodimer. The cofactor is [4Fe-4S] cluster. Requires [2Fe-2S] cluster as cofactor.

It catalyses the reaction (4R,5S)-dethiobiotin + (sulfur carrier)-SH + 2 reduced [2Fe-2S]-[ferredoxin] + 2 S-adenosyl-L-methionine = (sulfur carrier)-H + biotin + 2 5'-deoxyadenosine + 2 L-methionine + 2 oxidized [2Fe-2S]-[ferredoxin]. Its pathway is cofactor biosynthesis; biotin biosynthesis; biotin from 7,8-diaminononanoate: step 2/2. In terms of biological role, catalyzes the conversion of dethiobiotin (DTB) to biotin by the insertion of a sulfur atom into dethiobiotin via a radical-based mechanism. The chain is Biotin synthase from Chlorobium phaeovibrioides (strain DSM 265 / 1930) (Prosthecochloris vibrioformis (strain DSM 265)).